The sequence spans 104 residues: U20-lycotoxin-Ls1a (104 aa).

An N-terminal signal peptide occupies residues 1-30 (MFSTSDQVSKMNSRILSALLILGIATCVIA). Residues 31 to 76 (GGFCPKSRHPQCNLSYKINDCCAQSDCRVGSVCCVEGCGNVCRAES) form the WAP domain. 5 cysteine pairs are disulfide-bonded: Cys-34–Cys-64, Cys-42–Cys-68, Cys-51–Cys-63, Cys-52–Cys-90, and Cys-57–Cys-72.

It belongs to the venom protein 11 family. 02 (wap-2) subfamily. Contains 5 disulfide bonds. In terms of tissue distribution, expressed by the venom gland.

The protein resides in the secreted. Has antibacterial activity. The sequence is that of U20-lycotoxin-Ls1a from Lycosa singoriensis (Wolf spider).